The chain runs to 95 residues: Protein ECS1 (95 aa).

Residues 1 to 27 (MASSIVSSMFLFLLLLLVFPHIDNVLG) form the signal peptide.

In terms of tissue distribution, expressed in leaves, flowers and stems, but not in roots.

It localises to the secreted. Its subcellular location is the cell wall. Maybe involved in defense responses to X.campestris, but probably not a X.campestris pv. campestris race 750 (e.g. Xcc750) resistance gene; according to genetic data, linked to a locus influencing resistance to Xcc750. In Arabidopsis thaliana (Mouse-ear cress), this protein is Protein ECS1.